The following is a 475-amino-acid chain: Putative F-box protein At1g46840 (475 aa).

Positions 25-71 constitute an F-box domain; the sequence is TYVLEKLHIDLVIEILSRLSAKSIAICRCVSKQWNSLLVSQDFVESF. Low complexity predominate over residues 423–433; it reads SSYSTTRSYKS. Positions 423 to 475 are disordered; the sequence is SSYSTTRSYKSSGKRCSDRSIGEDEQDDIGEKRGDQAAERRERSTKRGKHEVH. Basic and acidic residues predominate over residues 451–464; that stretch reads IGEKRGDQAAERRE. Positions 465 to 475 are enriched in basic residues; that stretch reads RSTKRGKHEVH.

This chain is Putative F-box protein At1g46840, found in Arabidopsis thaliana (Mouse-ear cress).